The primary structure comprises 179 residues: Bifunctional protein PyrR (179 aa).

Positions 99 to 111 match the PRPP-binding motif; sequence VILVDDVLYTGRT.

The protein belongs to the purine/pyrimidine phosphoribosyltransferase family. PyrR subfamily. As to quaternary structure, homodimer and homohexamer; in equilibrium.

It catalyses the reaction UMP + diphosphate = 5-phospho-alpha-D-ribose 1-diphosphate + uracil. In terms of biological role, regulates transcriptional attenuation of the pyrimidine nucleotide (pyr) operon by binding in a uridine-dependent manner to specific sites on pyr mRNA. This disrupts an antiterminator hairpin in the RNA and favors formation of a downstream transcription terminator, leading to a reduced expression of downstream genes. Functionally, also displays a weak uracil phosphoribosyltransferase activity which is not physiologically significant. This is Bifunctional protein PyrR from Limosilactobacillus fermentum (strain NBRC 3956 / LMG 18251) (Lactobacillus fermentum).